The following is a 236-amino-acid chain: Leucyl/phenylalanyl-tRNA--protein transferase (236 aa).

Belongs to the L/F-transferase family.

It localises to the cytoplasm. It carries out the reaction N-terminal L-lysyl-[protein] + L-leucyl-tRNA(Leu) = N-terminal L-leucyl-L-lysyl-[protein] + tRNA(Leu) + H(+). It catalyses the reaction N-terminal L-arginyl-[protein] + L-leucyl-tRNA(Leu) = N-terminal L-leucyl-L-arginyl-[protein] + tRNA(Leu) + H(+). The catalysed reaction is L-phenylalanyl-tRNA(Phe) + an N-terminal L-alpha-aminoacyl-[protein] = an N-terminal L-phenylalanyl-L-alpha-aminoacyl-[protein] + tRNA(Phe). Functions in the N-end rule pathway of protein degradation where it conjugates Leu, Phe and, less efficiently, Met from aminoacyl-tRNAs to the N-termini of proteins containing an N-terminal arginine or lysine. The polypeptide is Leucyl/phenylalanyl-tRNA--protein transferase (Vibrio parahaemolyticus serotype O3:K6 (strain RIMD 2210633)).